The following is a 1441-amino-acid chain: Receptor-type tyrosine-protein phosphatase T (1441 aa).

An N-terminal signal peptide occupies residues 1-25; it reads MASLAALALSLLLRLQLPPLPGARA. The Extracellular segment spans residues 26-747; sequence QSAAGGCSFD…EKQVDNTVKM (722 aa). The region spanning 30-191 is the MAM domain; it reads GGCSFDEHYS…VRVLAHPCRK (162 aa). N-linked (GlcNAc...) asparagine glycans are attached at residues asparagine 78, asparagine 98, asparagine 137, and asparagine 208. Residues 193-284 form the Ig-like C2-type domain; that stretch reads PHFLRLQNVE…SGVSNYAELI (92 aa). The cysteines at positions 213 and 267 are disulfide-linked. 4 consecutive Fibronectin type-III domains span residues 291–384, 389–483, 484–590, and 591–726; these read PIAP…TKCA, GPQN…TEED, VPGA…SAPS, and MPEY…ATKG. Asparagine 421, asparagine 510, asparagine 547, asparagine 601, asparagine 654, and asparagine 684 each carry an N-linked (GlcNAc...) asparagine glycan. A helical membrane pass occupies residues 748-768; it reads AGVIAGLLMFIIILLGVMLTI. At 769–1441 the chain is on the cytoplasmic side; that stretch reads KRRRNAYSYS…EVALEYLSSF (673 aa). The interval 790 to 839 is disordered; the sequence is TQSGAQREMGPVASADKPTTKLSASRNDEGFSSSSQDVNGFTDGSRGELS. Over residues 809 to 828 the composition is skewed to polar residues; that stretch reads TKLSASRNDEGFSSSSQDVN. 2 Tyrosine-protein phosphatase domains span residues 889–1143 and 1175–1437; these read FKEE…ILEA and IKDE…ALEY. Substrate is bound by residues aspartate 1052, 1084–1090, and glutamine 1128; that span reads CSAGAGR. The active-site Phosphocysteine intermediate is cysteine 1084. The residue at position 1208 (serine 1208) is a Phosphoserine. The Phosphocysteine intermediate role is filled by cysteine 1378.

It belongs to the protein-tyrosine phosphatase family. Receptor class 2B subfamily. Expressed in colon, lung, heart and testis, as well as in fetal and adult brain. Not detected in muscle and peripheral blood leukocytes.

Its subcellular location is the membrane. It catalyses the reaction O-phospho-L-tyrosyl-[protein] + H2O = L-tyrosyl-[protein] + phosphate. Its function is as follows. May be involved in both signal transduction and cellular adhesion in the CNS. This Homo sapiens (Human) protein is Receptor-type tyrosine-protein phosphatase T (PTPRT).